Reading from the N-terminus, the 433-residue chain is Tol-Pal system protein TolB (433 aa).

The N-terminal stretch at 1-26 (MSLMTKLGFRALVASCLIAAGGAAHA) is a signal peptide.

This sequence belongs to the TolB family. As to quaternary structure, the Tol-Pal system is composed of five core proteins: the inner membrane proteins TolA, TolQ and TolR, the periplasmic protein TolB and the outer membrane protein Pal. They form a network linking the inner and outer membranes and the peptidoglycan layer.

It is found in the periplasm. Functionally, part of the Tol-Pal system, which plays a role in outer membrane invagination during cell division and is important for maintaining outer membrane integrity. In Burkholderia thailandensis (strain ATCC 700388 / DSM 13276 / CCUG 48851 / CIP 106301 / E264), this protein is Tol-Pal system protein TolB.